The sequence spans 101 residues: MDKSKRTFLKSKRSFRKRLPPIQSGDRIDYKNMSLISRFISEQGKILSRRVNRLTLKQQRLITIAIKQARILSLLPFLNNEKQFERTESTTRTPSLRARKR.

Belongs to the bacterial ribosomal protein bS18 family. As to quaternary structure, part of the 30S ribosomal subunit.

It localises to the plastid. It is found in the chloroplast. The sequence is that of Small ribosomal subunit protein bS18c from Guizotia abyssinica (Niger).